Consider the following 544-residue polypeptide: Membrane protein insertase YidC (544 aa).

The next 5 helical transmembrane spans lie at 13 to 33 (LSLF…SNIL), 343 to 363 (WGLS…PLTF), 409 to 429 (LGGC…YSLV), 461 to 481 (LYFV…FTQL), and 506 to 526 (MPIM…IYWI).

It belongs to the OXA1/ALB3/YidC family. Type 1 subfamily. In terms of assembly, interacts with the Sec translocase complex via SecD. Specifically interacts with transmembrane segments of nascent integral membrane proteins during membrane integration.

It localises to the cell inner membrane. Required for the insertion and/or proper folding and/or complex formation of integral membrane proteins into the membrane. Involved in integration of membrane proteins that insert both dependently and independently of the Sec translocase complex, as well as at least some lipoproteins. Aids folding of multispanning membrane proteins. The sequence is that of Membrane protein insertase YidC from Borreliella burgdorferi (strain ZS7) (Borrelia burgdorferi).